The primary structure comprises 227 residues: Transcriptional regulatory protein CusR (227 aa).

In terms of domain architecture, Response regulatory spans 2 to 116 (KLLIVEDEKK…ELLARVRTLL (115 aa)). Asp51 is modified (4-aspartylphosphate). A DNA-binding region (ompR/PhoB-type) is located at residues 125–223 (ESQFQVADLM…VRGVGYMLEV (99 aa)).

In terms of processing, phosphorylated by CusS.

Its subcellular location is the cytoplasm. Its function is as follows. Member of the two-component regulatory system CusS/CusR involved in response to copper and silver. The chain is Transcriptional regulatory protein CusR (cusR) from Escherichia coli O6:H1 (strain CFT073 / ATCC 700928 / UPEC).